The following is a 760-amino-acid chain: 5-methyltetrahydropteroyltriglutamate--homocysteine methyltransferase (760 aa).

Residues 24-27 (RELK) and K118 each bind 5-methyltetrahydropteroyltri-L-glutamate. L-homocysteine is bound by residues 437-439 (IGS) and E490. Residues 437 to 439 (IGS) and E490 contribute to the L-methionine site. 5-methyltetrahydropteroyltri-L-glutamate-binding positions include 521 to 522 (RC) and W567. Residue D605 participates in L-homocysteine binding. An L-methionine-binding site is contributed by D605. Residue E611 coordinates 5-methyltetrahydropteroyltri-L-glutamate. Zn(2+) contacts are provided by H647, C649, and E671. H700 functions as the Proton donor in the catalytic mechanism. Residue C732 participates in Zn(2+) binding.

Belongs to the vitamin-B12 independent methionine synthase family. Requires Zn(2+) as cofactor.

It catalyses the reaction 5-methyltetrahydropteroyltri-L-glutamate + L-homocysteine = tetrahydropteroyltri-L-glutamate + L-methionine. It participates in amino-acid biosynthesis; L-methionine biosynthesis via de novo pathway; L-methionine from L-homocysteine (MetE route): step 1/1. Its function is as follows. Catalyzes the transfer of a methyl group from 5-methyltetrahydrofolate to homocysteine resulting in methionine formation. The polypeptide is 5-methyltetrahydropteroyltriglutamate--homocysteine methyltransferase (Mycobacterium leprae (strain TN)).